A 163-amino-acid polypeptide reads, in one-letter code: Large ribosomal subunit protein uL10 (163 aa).

It belongs to the universal ribosomal protein uL10 family. In terms of assembly, part of the ribosomal stalk of the 50S ribosomal subunit. The N-terminus interacts with L11 and the large rRNA to form the base of the stalk. The C-terminus forms an elongated spine to which L12 dimers bind in a sequential fashion forming a multimeric L10(L12)X complex.

Forms part of the ribosomal stalk, playing a central role in the interaction of the ribosome with GTP-bound translation factors. This Blochmanniella pennsylvanica (strain BPEN) protein is Large ribosomal subunit protein uL10.